We begin with the raw amino-acid sequence, 51 residues long: Large ribosomal subunit protein eL39 (51 aa).

The protein belongs to the eukaryotic ribosomal protein eL39 family.

The chain is Large ribosomal subunit protein eL39 (rpl39e) from Pyrococcus abyssi (strain GE5 / Orsay).